Here is a 64-residue protein sequence, read N- to C-terminus: Temporin-ALd (64 aa).

Positions Met1–Cys22 are cleaved as a signal peptide. A propeptide spanning residues Glu23–Arg46 is cleaved from the precursor. Leu62 carries the leucine amide modification.

In terms of tissue distribution, expressed by the skin glands.

Its subcellular location is the secreted. Antimicrobial peptide with activity against Gram-positive and Gram-negative bacteria and against fungi. Has been tested against S.aureus (MIC=1.25 ug/mL), B.pumilus (MIC=2.5 ug/mL), B.cereus (MIC=15.0 ug/mL), E.coli (MIC=1.25 ug/mL), B.dysenteriae (MIC=5.0 ug/mL), A.cacoaceticus (MIC=15.0 ug/mL), P.aeruginosa (MIC=5.0 ug/mL) and C.albicans (MIC=1.25 ug/mL). Also shows a weak hemolytic activity. The polypeptide is Temporin-ALd (Amolops loloensis (Lolokou Sucker Frog)).